A 388-amino-acid polypeptide reads, in one-letter code: Chorismate synthase (388 aa).

Positions 39 and 45 each coordinate NADP(+). Residues 95–118 (EKNEKSRRVSRPRPGHADLVGGMK) are disordered. FMN-binding positions include 130-132 (RSS), 251-252 (NA), Gly-296, 311-315 (KPIPT), and Arg-337.

The protein belongs to the chorismate synthase family. In terms of assembly, homotetramer. The cofactor is FMNH2.

It catalyses the reaction 5-O-(1-carboxyvinyl)-3-phosphoshikimate = chorismate + phosphate. It participates in metabolic intermediate biosynthesis; chorismate biosynthesis; chorismate from D-erythrose 4-phosphate and phosphoenolpyruvate: step 7/7. Catalyzes the anti-1,4-elimination of the C-3 phosphate and the C-6 proR hydrogen from 5-enolpyruvylshikimate-3-phosphate (EPSP) to yield chorismate, which is the branch point compound that serves as the starting substrate for the three terminal pathways of aromatic amino acid biosynthesis. This reaction introduces a second double bond into the aromatic ring system. The polypeptide is Chorismate synthase (Listeria innocua serovar 6a (strain ATCC BAA-680 / CLIP 11262)).